The chain runs to 567 residues: Phosphoglucomutase-like protein 5 (567 aa).

A disordered region spans residues 1 to 26 (MEGSPIPVLTVPTAPYEDQRPTGGGG). Thr120 carries the phosphothreonine modification. At Ser122 the chain carries Phosphoserine.

This sequence belongs to the phosphohexose mutase family. Interacts with DMD/dystrophin; the interaction is direct. Interacts with UTRN/utrophin.

It is found in the cell junction. The protein localises to the adherens junction. Its subcellular location is the cytoplasm. The protein resides in the cytoskeleton. It localises to the cell membrane. It is found in the sarcolemma. In terms of biological role, component of adherens-type cell-cell and cell-matrix junctions. Has no phosphoglucomutase activity in vitro. This Rattus norvegicus (Rat) protein is Phosphoglucomutase-like protein 5.